A 277-amino-acid chain; its full sequence is Myelin proteolipid protein (277 aa).

Residues 1–10 (MGLLECCARC) are Cytoplasmic-facing. Residues Cys6, Cys7, and Cys10 are each lipidated (S-palmitoyl cysteine). Residues 11-36 (LVGAPFASLVATGLCFFGVALFCGCG) traverse the membrane as a helical segment. At 37-59 (HEALTGTEKLIETYFSKNYQDYE) the chain is on the extracellular side. Residues 60 to 88 (YLINVIHAFQYVIYGTASFFFLYGALLLA) form a helical membrane-spanning segment. Residues 89 to 151 (EGFYTTGAVR…LGKWLGHPDK (63 aa)) are Cytoplasmic-facing. A lipid anchor (S-palmitoyl cysteine) is attached at Cys109. Position 114 is a phosphoserine (Ser114). 2 positions are modified to phosphothreonine: Thr116 and Thr118. 2 S-palmitoyl cysteine lipidation sites follow: Cys139 and Cys141. Residues 152–178 (FVGITYALTVVWLLVFACSAVPVYIYF) traverse the membrane as a helical segment. Residues 179–238 (NTWTTCQSIAFPSKTSASIGTLCADARMYGVLPWNAFPGKVCGSNLLSICKTAEFQMTFH) lie on the Extracellular side of the membrane. 2 disulfides stabilise this stretch: Cys184–Cys228 and Cys201–Cys220. Thr199 is lipidated: O-palmitoyl threonine. Residues 239–268 (LFIAAFVGAAATLVSLLTFMIAATYNFAVL) form a helical membrane-spanning segment. Topologically, residues 269-277 (KLMGRGTKF) are cytoplasmic.

The protein belongs to the myelin proteolipid protein family. Interacts with MAL.

It localises to the cell membrane. The protein resides in the myelin membrane. Its function is as follows. This is the major myelin protein from the central nervous system. It plays an important role in the formation or maintenance of the multilamellar structure of myelin. This is Myelin proteolipid protein (PLP1) from Oryctolagus cuniculus (Rabbit).